Here is a 153-residue protein sequence, read N- to C-terminus: Xanthine-guanine phosphoribosyltransferase (153 aa).

Residues arginine 37–glycine 38, arginine 69, and aspartate 88–threonine 96 contribute to the 5-phospho-alpha-D-ribose 1-diphosphate site. Arginine 69 is a binding site for GMP. Aspartate 89 provides a ligand contact to Mg(2+). Aspartate 92 and isoleucine 135 together coordinate guanine. Positions 92 and 135 each coordinate xanthine. GMP is bound by residues aspartate 92–threonine 96 and tryptophan 134–isoleucine 135.

It belongs to the purine/pyrimidine phosphoribosyltransferase family. XGPT subfamily. In terms of assembly, homotetramer. The cofactor is Mg(2+).

Its subcellular location is the cell membrane. It catalyses the reaction GMP + diphosphate = guanine + 5-phospho-alpha-D-ribose 1-diphosphate. The catalysed reaction is XMP + diphosphate = xanthine + 5-phospho-alpha-D-ribose 1-diphosphate. The enzyme catalyses IMP + diphosphate = hypoxanthine + 5-phospho-alpha-D-ribose 1-diphosphate. The protein operates within purine metabolism; GMP biosynthesis via salvage pathway; GMP from guanine: step 1/1. Its pathway is purine metabolism; XMP biosynthesis via salvage pathway; XMP from xanthine: step 1/1. Purine salvage pathway enzyme that catalyzes the transfer of the ribosyl-5-phosphate group from 5-phospho-alpha-D-ribose 1-diphosphate (PRPP) to the N9 position of the 6-oxopurines guanine and xanthine to form the corresponding ribonucleotides GMP (guanosine 5'-monophosphate) and XMP (xanthosine 5'-monophosphate), with the release of PPi. To a lesser extent, also acts on hypoxanthine. The polypeptide is Xanthine-guanine phosphoribosyltransferase (Buchnera aphidicola subsp. Baizongia pistaciae (strain Bp)).